A 101-amino-acid polypeptide reads, in one-letter code: Signal recognition particle 19 kDa protein (101 aa).

The protein belongs to the SRP19 family. In terms of assembly, part of the signal recognition particle protein translocation system, which is composed of SRP and FtsY. Archaeal SRP consists of a 7S RNA molecule of 300 nucleotides and two protein subunits: SRP54 and SRP19.

The protein resides in the cytoplasm. Involved in targeting and insertion of nascent membrane proteins into the cytoplasmic membrane. Binds directly to 7S RNA and mediates binding of the 54 kDa subunit of the SRP. This chain is Signal recognition particle 19 kDa protein, found in Methanosarcina mazei (strain ATCC BAA-159 / DSM 3647 / Goe1 / Go1 / JCM 11833 / OCM 88) (Methanosarcina frisia).